The sequence spans 274 residues: MAHYFVGDIQGCFAELQKLLAKVDFNPSRDELWAVGDLVARGPDSLATLRFFRSLGDSAKTVLGNHDLHLMALHGKLKRTKPSDNLTEILESPDISASIDWLRQQPLMRELPEHQLIMSHAGVPPLWSLEVLREEAALVSCALKQDDYLEALISQMYSDSAEQWDPSAIGIERLRYCINALTRMRYLYVDGRLDFDCKQPPENCTNPQLKPWFEFASPLRQSHTLVFGHWAALMGNVGDSKLKALDTGCCWGEHLTLWHLEKDQKITQKKLKKS.

Belongs to the Ap4A hydrolase family.

It carries out the reaction P(1),P(4)-bis(5'-adenosyl) tetraphosphate + H2O = 2 ADP + 2 H(+). Its function is as follows. Hydrolyzes diadenosine 5',5'''-P1,P4-tetraphosphate to yield ADP. The sequence is that of Bis(5'-nucleosyl)-tetraphosphatase, symmetrical from Shewanella baltica (strain OS223).